The following is an 85-amino-acid chain: Large ribosomal subunit protein bL27 (85 aa).

The interval M1–G22 is disordered.

This sequence belongs to the bacterial ribosomal protein bL27 family.

This Tolumonas auensis (strain DSM 9187 / NBRC 110442 / TA 4) protein is Large ribosomal subunit protein bL27.